The chain runs to 199 residues: Guanylate kinase (199 aa).

The region spanning 20 to 198 (GKLIVLTGPS…ALQAIEVALF (179 aa)) is the Guanylate kinase-like domain. 27–34 (GPSGVGKG) contacts ATP.

This sequence belongs to the guanylate kinase family.

It localises to the cytoplasm. The enzyme catalyses GMP + ATP = GDP + ADP. Essential for recycling GMP and indirectly, cGMP. The chain is Guanylate kinase from Trichormus variabilis (strain ATCC 29413 / PCC 7937) (Anabaena variabilis).